The sequence spans 162 residues: ATP-dependent Clp protease adapter protein CLPS1, chloroplastic (162 aa).

Residues 1-58 constitute a chloroplast transit peptide; sequence MAASCLRPAPTASAQMMTRSPVAGLPRPCSALQRSGCTLQGAFGTFAPQTTRTFVVTW.

It belongs to the ClpS family.

It localises to the plastid. It is found in the chloroplast stroma. Small adapter protein that modulate the activity of plastid Clp protease system (CLPC). Probably involved in substrate selection for plastid CLPC. The sequence is that of ATP-dependent Clp protease adapter protein CLPS1, chloroplastic from Chlamydomonas reinhardtii (Chlamydomonas smithii).